Reading from the N-terminus, the 387-residue chain is Diphthine methyltransferase (387 aa).

WD repeat units follow at residues 62–102 (NTYG…KDDF), 119–159 (EKDV…VQFT), 195–237 (PHEL…FIWS), 241–286 (IHDA…ESIF), and 357–387 (GHDSMCYGGDWSNSLIATCSFYDNSLQTWIV).

It belongs to the DPH7 family. Interacts with CAN1 and RTT10.

The protein resides in the cytoplasm. It localises to the endosome. The catalysed reaction is diphthine methyl ester-[translation elongation factor 2] + H2O = diphthine-[translation elongation factor 2] + methanol + H(+). It functions in the pathway protein modification; peptidyl-diphthamide biosynthesis. Catalyzes the demethylation of diphthine methyl ester to form diphthine, an intermediate in diphthamide biosynthesis, a post-translational modification of histidine which occurs in translation elongation factor 2 (EFT1 and EFT2). Also plays a role in the regulation of the retromer complex and is required for the recycling from endosomes of plasma membrane proteins like CAN1 and MUP1. Identified in a screen for mutants with decreased levels of rDNA transcription. This Saccharomyces cerevisiae (strain ATCC 204508 / S288c) (Baker's yeast) protein is Diphthine methyltransferase (RRT2).